Consider the following 608-residue polypeptide: Glutamine--fructose-6-phosphate aminotransferase [isomerizing] (608 aa).

Catalysis depends on C2, which acts as the Nucleophile; for GATase activity. One can recognise a Glutamine amidotransferase type-2 domain in the interval 2–217; sequence CGIVGIVGTQ…DGDCAIVTRD (216 aa). 2 SIS domains span residues 281–422 and 456–598; these read ADKA…ARGT and LSRD…VDQP. K603 functions as the For Fru-6P isomerization activity in the catalytic mechanism.

Homodimer.

The protein resides in the cytoplasm. It catalyses the reaction D-fructose 6-phosphate + L-glutamine = D-glucosamine 6-phosphate + L-glutamate. In terms of biological role, catalyzes the first step in hexosamine metabolism, converting fructose-6P into glucosamine-6P using glutamine as a nitrogen source. This Agrobacterium fabrum (strain C58 / ATCC 33970) (Agrobacterium tumefaciens (strain C58)) protein is Glutamine--fructose-6-phosphate aminotransferase [isomerizing].